A 251-amino-acid polypeptide reads, in one-letter code: SPbeta prophage-derived putative antirepressor protein YoqD (251 aa).

This Bacillus subtilis (strain 168) protein is SPbeta prophage-derived putative antirepressor protein YoqD (yoqD).